A 259-amino-acid polypeptide reads, in one-letter code: NAD(P)H-quinone oxidoreductase subunit K 2 (259 aa).

Residues Cys52, Cys53, Cys117, and Cys148 each coordinate [4Fe-4S] cluster.

The protein belongs to the complex I 20 kDa subunit family. In terms of assembly, NDH-1 can be composed of about 15 different subunits; different subcomplexes with different compositions have been identified which probably have different functions. [4Fe-4S] cluster is required as a cofactor.

It localises to the cellular thylakoid membrane. It catalyses the reaction a plastoquinone + NADH + (n+1) H(+)(in) = a plastoquinol + NAD(+) + n H(+)(out). It carries out the reaction a plastoquinone + NADPH + (n+1) H(+)(in) = a plastoquinol + NADP(+) + n H(+)(out). In terms of biological role, NDH-1 shuttles electrons from an unknown electron donor, via FMN and iron-sulfur (Fe-S) centers, to quinones in the respiratory and/or the photosynthetic chain. The immediate electron acceptor for the enzyme in this species is believed to be plastoquinone. Couples the redox reaction to proton translocation, and thus conserves the redox energy in a proton gradient. Cyanobacterial NDH-1 also plays a role in inorganic carbon-concentration. The protein is NAD(P)H-quinone oxidoreductase subunit K 2 (ndhK2) of Cyanothece sp. (strain PCC 7425 / ATCC 29141).